Reading from the N-terminus, the 130-residue chain is C-C motif chemokine 28 (130 aa).

An N-terminal signal peptide occupies residues M1 to A16. Disulfide bonds link C30-C58 and C31-C73. N78 carries N-linked (GlcNAc...) asparagine glycosylation. Residues K92–R130 form a disordered region. A compositionally biased stretch (basic residues) spans Q104–H124.

The protein belongs to the intercrine beta (chemokine CC) family. In terms of tissue distribution, mainly expressed in testis, epithelial cells of normal colon, kidney, Peyer patches, lymph nodes. Also found in lower levels in brain, spleen and lung.

It is found in the secreted. Its function is as follows. Chemotactic for resting CD4, CD8 T-cells and eosinophils. Binds to CCR10 and induces calcium mobilization in a dose-dependent manner. This chain is C-C motif chemokine 28 (Ccl28), found in Mus musculus (Mouse).